We begin with the raw amino-acid sequence, 211 residues long: Thiamine-phosphate synthase (211 aa).

4-amino-2-methyl-5-(diphosphooxymethyl)pyrimidine is bound by residues Gln-37 to Lys-41 and Asn-69. Asp-70 and Asp-89 together coordinate Mg(2+). Ser-108 is a binding site for 4-amino-2-methyl-5-(diphosphooxymethyl)pyrimidine. Thr-134–Thr-136 contributes to the 2-[(2R,5Z)-2-carboxy-4-methylthiazol-5(2H)-ylidene]ethyl phosphate binding site. Lys-137 serves as a coordination point for 4-amino-2-methyl-5-(diphosphooxymethyl)pyrimidine. Residues Gly-166 and Val-186 to Ser-187 contribute to the 2-[(2R,5Z)-2-carboxy-4-methylthiazol-5(2H)-ylidene]ethyl phosphate site.

This sequence belongs to the thiamine-phosphate synthase family. Mg(2+) is required as a cofactor.

The enzyme catalyses 2-[(2R,5Z)-2-carboxy-4-methylthiazol-5(2H)-ylidene]ethyl phosphate + 4-amino-2-methyl-5-(diphosphooxymethyl)pyrimidine + 2 H(+) = thiamine phosphate + CO2 + diphosphate. It catalyses the reaction 2-(2-carboxy-4-methylthiazol-5-yl)ethyl phosphate + 4-amino-2-methyl-5-(diphosphooxymethyl)pyrimidine + 2 H(+) = thiamine phosphate + CO2 + diphosphate. It carries out the reaction 4-methyl-5-(2-phosphooxyethyl)-thiazole + 4-amino-2-methyl-5-(diphosphooxymethyl)pyrimidine + H(+) = thiamine phosphate + diphosphate. Its pathway is cofactor biosynthesis; thiamine diphosphate biosynthesis; thiamine phosphate from 4-amino-2-methyl-5-diphosphomethylpyrimidine and 4-methyl-5-(2-phosphoethyl)-thiazole: step 1/1. In terms of biological role, condenses 4-methyl-5-(beta-hydroxyethyl)thiazole monophosphate (THZ-P) and 2-methyl-4-amino-5-hydroxymethyl pyrimidine pyrophosphate (HMP-PP) to form thiamine monophosphate (TMP). This chain is Thiamine-phosphate synthase, found in Salmonella typhimurium (strain LT2 / SGSC1412 / ATCC 700720).